The sequence spans 326 residues: Peroxidase 3 (326 aa).

An N-terminal signal peptide occupies residues 1 to 24 (MNCLIAIALSVSFFLVGIVGPIQA). Intrachain disulfides connect C35–C113, C68–C73, C119–C321, and C198–C231. H66 acts as the Proton acceptor in catalysis. 5 residues coordinate Ca(2+): D67, V70, G72, D74, and S76. Residues N80 and N138 are each glycosylated (N-linked (GlcNAc...) asparagine). Substrate is bound at residue P161. N166 carries N-linked (GlcNAc...) asparagine glycosylation. H191 serves as a coordination point for heme b. Ca(2+) is bound at residue T192. N-linked (GlcNAc...) asparagine glycans are attached at residues N207 and N237. D244, S247, and D252 together coordinate Ca(2+).

The protein belongs to the peroxidase family. Classical plant (class III) peroxidase subfamily. Heme b is required as a cofactor. Ca(2+) serves as cofactor. Expressed in root cells.

The protein resides in the secreted. It catalyses the reaction 2 a phenolic donor + H2O2 = 2 a phenolic radical donor + 2 H2O. Removal of H(2)O(2), oxidation of toxic reductants, biosynthesis and degradation of lignin, suberization, auxin catabolism, response to environmental stresses such as wounding, pathogen attack and oxidative stress. These functions might be dependent on each isozyme/isoform in each plant tissue. In Arabidopsis thaliana (Mouse-ear cress), this protein is Peroxidase 3 (PER3).